Here is a 417-residue protein sequence, read N- to C-terminus: L-rhamnose isomerase (417 aa).

Residues histidine 260, aspartate 292, and aspartate 294 each contribute to the Mn(2+) site.

It belongs to the rhamnose isomerase family. Requires Mn(2+) as cofactor.

Its subcellular location is the cytoplasm. The enzyme catalyses L-rhamnopyranose = L-rhamnulose. It functions in the pathway carbohydrate degradation; L-rhamnose degradation; glycerone phosphate from L-rhamnose: step 1/3. Its function is as follows. Catalyzes the interconversion of L-rhamnose and L-rhamnulose. This is L-rhamnose isomerase from Mannheimia succiniciproducens (strain KCTC 0769BP / MBEL55E).